A 572-amino-acid chain; its full sequence is Proline--tRNA ligase (572 aa).

This sequence belongs to the class-II aminoacyl-tRNA synthetase family. ProS type 1 subfamily. In terms of assembly, homodimer.

The protein resides in the cytoplasm. The catalysed reaction is tRNA(Pro) + L-proline + ATP = L-prolyl-tRNA(Pro) + AMP + diphosphate. Catalyzes the attachment of proline to tRNA(Pro) in a two-step reaction: proline is first activated by ATP to form Pro-AMP and then transferred to the acceptor end of tRNA(Pro). As ProRS can inadvertently accommodate and process non-cognate amino acids such as alanine and cysteine, to avoid such errors it has two additional distinct editing activities against alanine. One activity is designated as 'pretransfer' editing and involves the tRNA(Pro)-independent hydrolysis of activated Ala-AMP. The other activity is designated 'posttransfer' editing and involves deacylation of mischarged Ala-tRNA(Pro). The misacylated Cys-tRNA(Pro) is not edited by ProRS. The sequence is that of Proline--tRNA ligase from Photorhabdus laumondii subsp. laumondii (strain DSM 15139 / CIP 105565 / TT01) (Photorhabdus luminescens subsp. laumondii).